A 162-amino-acid polypeptide reads, in one-letter code: Cytochrome c-type biogenesis protein CcmE (162 aa).

Topologically, residues 1–8 (MNPRRKKR) are cytoplasmic. Residues 9-29 (LTLAVALIGGVAAIASLLLYA) traverse the membrane as a helical; Signal-anchor for type II membrane protein segment. Topologically, residues 30 to 162 (LNSNLNLFYT…YSQQKAPDTK (133 aa)) are periplasmic. Positions 131 and 135 each coordinate heme. The interval 139–162 (EVAEAMGQKHEKLDYSQQKAPDTK) is disordered. The segment covering 153–162 (YSQQKAPDTK) has biased composition (polar residues).

Belongs to the CcmE/CycJ family.

Its subcellular location is the cell inner membrane. In terms of biological role, heme chaperone required for the biogenesis of c-type cytochromes. Transiently binds heme delivered by CcmC and transfers the heme to apo-cytochromes in a process facilitated by CcmF and CcmH. This chain is Cytochrome c-type biogenesis protein CcmE, found in Shewanella putrefaciens (strain CN-32 / ATCC BAA-453).